The following is a 486-amino-acid chain: Aspartyl/glutamyl-tRNA(Asn/Gln) amidotransferase subunit B (486 aa).

The protein belongs to the GatB/GatE family. GatB subfamily. Heterotrimer of A, B and C subunits.

It catalyses the reaction L-glutamyl-tRNA(Gln) + L-glutamine + ATP + H2O = L-glutaminyl-tRNA(Gln) + L-glutamate + ADP + phosphate + H(+). The enzyme catalyses L-aspartyl-tRNA(Asn) + L-glutamine + ATP + H2O = L-asparaginyl-tRNA(Asn) + L-glutamate + ADP + phosphate + 2 H(+). Allows the formation of correctly charged Asn-tRNA(Asn) or Gln-tRNA(Gln) through the transamidation of misacylated Asp-tRNA(Asn) or Glu-tRNA(Gln) in organisms which lack either or both of asparaginyl-tRNA or glutaminyl-tRNA synthetases. The reaction takes place in the presence of glutamine and ATP through an activated phospho-Asp-tRNA(Asn) or phospho-Glu-tRNA(Gln). The protein is Aspartyl/glutamyl-tRNA(Asn/Gln) amidotransferase subunit B of Janthinobacterium sp. (strain Marseille) (Minibacterium massiliensis).